The following is a 309-amino-acid chain: MAPKFPDSVEELRAAGNESFRNGQYAEASALYGRALRVLQAQGSSDPEEESVLYSNRAACHLKDGNCRDCIKDCTSALALVPFSIKPLLRRASAYEALEKYPMAYVDYKTVLQIDDNVTSAVEGINRMTRALMDSLGPEWRLKLPSIPLVPVSAQKRWNSLPSENHKEMAKSKSKETTATKNRVPSAGDVEKARVLKEEGNELVKKGNHKKAIEKYSESLLCSNLESATYSNRALCYLVLKQYTEAVKDCTEALKLDGKNVKAFYRRAQAHKALKDYKSSFADISNLLQIEPRNGPAQKLRQEVKQNLH.

Ser8 bears the Phosphoserine mark. 3 TPR repeats span residues 9-42 (VEEL…LQAQ), 51-84 (SVLY…VPFS), and 86-118 (KPLL…DDNV). Position 160 is a phosphoserine (Ser160). The segment at 161-189 (LPSENHKEMAKSKSKETTATKNRVPSAGD) is disordered. Positions 164–178 (ENHKEMAKSKSKETT) are enriched in basic and acidic residues. Position 186 is a phosphoserine (Ser186). 3 TPR repeats span residues 193 to 226 (ARVL…SNLE), 227 to 260 (SATY…DGKN), and 262 to 294 (KAFY…EPRN). Lys197 participates in a covalent cross-link: Glycyl lysine isopeptide (Lys-Gly) (interchain with G-Cter in SUMO2).

Belongs to the Tom34 family. Interacts with HSP90A, VCP, ATP6V1D, KIAA0665, AMPK, and DMAP1 through its TPR repeat. Ubiquitous.

The protein resides in the cytoplasm. Its subcellular location is the mitochondrion outer membrane. Its function is as follows. Plays a role in the import of cytosolically synthesized preproteins into mitochondria. Binds the mature portion of precursor proteins. Interacts with cellular components, and possesses weak ATPase activity. May be a chaperone-like protein that helps to keep newly synthesized precursors in an unfolded import compatible state. This Homo sapiens (Human) protein is Mitochondrial import receptor subunit TOM34 (TOMM34).